We begin with the raw amino-acid sequence, 277 residues long: 4-hydroxy-tetrahydrodipicolinate reductase (277 aa).

NAD(+)-binding positions include 10–15 and glutamate 36; that span reads GAGGRM. Arginine 37 contacts NADP(+). NAD(+) contacts are provided by residues 100-102 and 124-127; these read GTT and SGNM. Histidine 158 serves as the catalytic Proton donor/acceptor. Histidine 159 contacts (S)-2,3,4,5-tetrahydrodipicolinate. The active-site Proton donor is the lysine 162. (S)-2,3,4,5-tetrahydrodipicolinate is bound at residue 168–169; sequence GT.

The protein belongs to the DapB family.

It localises to the cytoplasm. It catalyses the reaction (S)-2,3,4,5-tetrahydrodipicolinate + NAD(+) + H2O = (2S,4S)-4-hydroxy-2,3,4,5-tetrahydrodipicolinate + NADH + H(+). It carries out the reaction (S)-2,3,4,5-tetrahydrodipicolinate + NADP(+) + H2O = (2S,4S)-4-hydroxy-2,3,4,5-tetrahydrodipicolinate + NADPH + H(+). It functions in the pathway amino-acid biosynthesis; L-lysine biosynthesis via DAP pathway; (S)-tetrahydrodipicolinate from L-aspartate: step 4/4. Catalyzes the conversion of 4-hydroxy-tetrahydrodipicolinate (HTPA) to tetrahydrodipicolinate. This chain is 4-hydroxy-tetrahydrodipicolinate reductase, found in Chelativorans sp. (strain BNC1).